Here is a 169-residue protein sequence, read N- to C-terminus: Crossover junction endodeoxyribonuclease RuvC (169 aa).

Active-site residues include D11, E71, and D143. Mg(2+)-binding residues include D11, E71, and D143.

Belongs to the RuvC family. Homodimer which binds Holliday junction (HJ) DNA. The HJ becomes 2-fold symmetrical on binding to RuvC with unstacked arms; it has a different conformation from HJ DNA in complex with RuvA. In the full resolvosome a probable DNA-RuvA(4)-RuvB(12)-RuvC(2) complex forms which resolves the HJ. Requires Mg(2+) as cofactor.

It is found in the cytoplasm. It catalyses the reaction Endonucleolytic cleavage at a junction such as a reciprocal single-stranded crossover between two homologous DNA duplexes (Holliday junction).. Its function is as follows. The RuvA-RuvB-RuvC complex processes Holliday junction (HJ) DNA during genetic recombination and DNA repair. Endonuclease that resolves HJ intermediates. Cleaves cruciform DNA by making single-stranded nicks across the HJ at symmetrical positions within the homologous arms, yielding a 5'-phosphate and a 3'-hydroxyl group; requires a central core of homology in the junction. The consensus cleavage sequence is 5'-(A/T)TT(C/G)-3'. Cleavage occurs on the 3'-side of the TT dinucleotide at the point of strand exchange. HJ branch migration catalyzed by RuvA-RuvB allows RuvC to scan DNA until it finds its consensus sequence, where it cleaves and resolves the cruciform DNA. The protein is Crossover junction endodeoxyribonuclease RuvC of Bartonella henselae (strain ATCC 49882 / DSM 28221 / CCUG 30454 / Houston 1) (Rochalimaea henselae).